The sequence spans 140 residues: Putative pre-16S rRNA nuclease (140 aa).

The protein belongs to the YqgF nuclease family.

The protein localises to the cytoplasm. Its function is as follows. Could be a nuclease involved in processing of the 5'-end of pre-16S rRNA. In Aeromonas hydrophila, this protein is Putative pre-16S rRNA nuclease.